A 189-amino-acid chain; its full sequence is Probable nicotinate-nucleotide adenylyltransferase (189 aa).

It belongs to the NadD family.

It catalyses the reaction nicotinate beta-D-ribonucleotide + ATP + H(+) = deamido-NAD(+) + diphosphate. Its pathway is cofactor biosynthesis; NAD(+) biosynthesis; deamido-NAD(+) from nicotinate D-ribonucleotide: step 1/1. In terms of biological role, catalyzes the reversible adenylation of nicotinate mononucleotide (NaMN) to nicotinic acid adenine dinucleotide (NaAD). This chain is Probable nicotinate-nucleotide adenylyltransferase, found in Staphylococcus aureus (strain N315).